The sequence spans 413 residues: Multifunctional CCA protein (413 aa).

ATP is bound by residues Gly-8 and Arg-11. CTP contacts are provided by Gly-8 and Arg-11. Residues Asp-21 and Asp-23 each coordinate Mg(2+). The ATP site is built by Arg-91, Arg-143, and Arg-146. Arg-91, Arg-143, and Arg-146 together coordinate CTP. Residues 232–333 (TGVHVMMVVD…VRFFERSDAL (102 aa)) form the HD domain.

This sequence belongs to the tRNA nucleotidyltransferase/poly(A) polymerase family. Bacterial CCA-adding enzyme type 1 subfamily. Monomer. Can also form homodimers and oligomers. It depends on Mg(2+) as a cofactor. Ni(2+) is required as a cofactor.

The enzyme catalyses a tRNA precursor + 2 CTP + ATP = a tRNA with a 3' CCA end + 3 diphosphate. It catalyses the reaction a tRNA with a 3' CCA end + 2 CTP + ATP = a tRNA with a 3' CCACCA end + 3 diphosphate. Functionally, catalyzes the addition and repair of the essential 3'-terminal CCA sequence in tRNAs without using a nucleic acid template. Adds these three nucleotides in the order of C, C, and A to the tRNA nucleotide-73, using CTP and ATP as substrates and producing inorganic pyrophosphate. tRNA 3'-terminal CCA addition is required both for tRNA processing and repair. Also involved in tRNA surveillance by mediating tandem CCA addition to generate a CCACCA at the 3' terminus of unstable tRNAs. While stable tRNAs receive only 3'-terminal CCA, unstable tRNAs are marked with CCACCA and rapidly degraded. The polypeptide is Multifunctional CCA protein (Burkholderia ambifaria (strain ATCC BAA-244 / DSM 16087 / CCUG 44356 / LMG 19182 / AMMD) (Burkholderia cepacia (strain AMMD))).